A 456-amino-acid chain; its full sequence is tRNA modification GTPase MnmE (456 aa).

(6S)-5-formyl-5,6,7,8-tetrahydrofolate is bound by residues Arg-24, Glu-81, and Lys-120. The TrmE-type G domain occupies 216 to 379 (GMTVVIAGRP…LRDHLKACMG (164 aa)). Asn-226 is a K(+) binding site. GTP-binding positions include 226–231 (NAGKSS), 245–251 (TDIAGTT), 270–273 (DTAG), and 335–338 (NKAD). Ser-230 lines the Mg(2+) pocket. K(+) contacts are provided by Thr-245, Ile-247, and Thr-250. Thr-251 provides a ligand contact to Mg(2+). Lys-456 contributes to the (6S)-5-formyl-5,6,7,8-tetrahydrofolate binding site.

This sequence belongs to the TRAFAC class TrmE-Era-EngA-EngB-Septin-like GTPase superfamily. TrmE GTPase family. Homodimer. Heterotetramer of two MnmE and two MnmG subunits. K(+) serves as cofactor.

The protein resides in the cytoplasm. Its function is as follows. Exhibits a very high intrinsic GTPase hydrolysis rate. Involved in the addition of a carboxymethylaminomethyl (cmnm) group at the wobble position (U34) of certain tRNAs, forming tRNA-cmnm(5)s(2)U34. This is tRNA modification GTPase MnmE from Pseudomonas fluorescens (strain ATCC BAA-477 / NRRL B-23932 / Pf-5).